Reading from the N-terminus, the 195-residue chain is WYSSMFAANIKQEPISHHHHHHHAHHSHHAHDSNSNSNASSPHQSPLPSPNPPSHTNLQLEQYLKQQQQQQQQHQHQQQQQPMDTLCAAAMTPSPSNNDQNSLGWLVGLPNPMQTIMPANMRPSPTATTATAAAAAPTTTAAAIALQANDKLQALTPPMDVTPPKSPAKSQQSCAEPEKEHDLMSNSSEDMKYMA.

Disordered stretches follow at residues 16–57, 64–83, and 155–195; these read SHHH…SHTN, LKQQ…QQPM, and LTPP…KYMA. The span at 17–29 shows a compositional bias: basic residues; that stretch reads HHHHHHHAHHSHH. 2 stretches are compositionally biased toward low complexity: residues 33–44 and 66–81; these read SNSNSNASSPHQ and QQQQ…QQQQ. Basic and acidic residues predominate over residues 176 to 195; that stretch reads EPEKEHDLMSNSSEDMKYMA.

This sequence belongs to the hunchback C2H2-type zinc-finger protein family.

The protein localises to the nucleus. In terms of biological role, gap class segmentation protein that controls development of head structures. This is Protein hunchback (hb) from Drosophila dasycnemia (Fruit fly).